We begin with the raw amino-acid sequence, 388 residues long: MSSKRMDSGSKDIISNLPDALLCHVLSFLPTTEAASTSVLAKRWRFLLAFVPNLDLDNMIYDRPKMGRRKRLELRKSFKLFVDRVMALQGNAPLKKFSLRCKIGSDPSRVNGWVLKVLDRGVEELDLYIASEYEYPLPPKVLMTKTLVSLKVSGTDEFTIDVGEFFLPKLKTLHLSAISFGDEGGPPFAKLISACHALEELVMIKMMWDYWEFCSVSSPSLKRVSIDCENIDENPKSVSFDTPNLVYLEFTDTVAVKYPKVNFDSLVEASIGLRMTPDQVFDARDLVNRHHGYKRCKGANAADFMMGVCNVKTMYLSSEALEVLTFCCKKAIPVFNNLIHLTVETDERVDWESLPILLKNCPNLETLIFEVPSHILFLHDLTHFFSNT.

In terms of domain architecture, F-box spans 11 to 64 (KDIISNLPDALLCHVLSFLPTTEAASTSVLAKRWRFLLAFVPNLDLDNMIYDRP). 5 LRR repeats span residues 151 to 177 (KVSGTDEFTIDVGEFFLPKLKTLHLSA), 180 to 205 (FGDEGGPPFAKLISACHALEELVMIK), 228 to 252 (CENIDENPKSVSFDTPNLVYLEFTD), 313 to 345 (TMYLSSEALEVLTFCCKKAIPVFNNLIHLTVET), and 346 to 371 (DERVDWESLPILLKNCPNLETLIFEV).

The sequence is that of F-box/LRR-repeat protein At3g59190 from Arabidopsis thaliana (Mouse-ear cress).